We begin with the raw amino-acid sequence, 523 residues long: Synaptotagmin-10 (523 aa).

Residues 1 to 55 (MSFRKEDGVSSLCQKALHIITELCFAGQVEWDKCSGIFPADRSGQGGGGTDISVS) are Vesicular-facing. Residues 13 to 35 (CQKALHIITELCFAGQVEWDKCS) form a cysteine motif region. The chain crosses the membrane as a helical span at residues 56–76 (LLAVVVSFCGLALLVVSLFVF). Residues 77 to 523 (WKLCWPCWKS…CSSPRPPSTP (447 aa)) lie on the Cytoplasmic side of the membrane. Residue T136 is modified to Phosphothreonine. C2 domains lie at 231–352 (TCGK…TVWK) and 363–496 (DLGE…THWH). Ca(2+) contacts are provided by D262, D268, D320, F321, D322, S325, D328, D394, D400, D454, and D456.

The protein belongs to the synaptotagmin family. Homodimer; disulfide-linked via the cysteine motif. Can also form heterodimers with SYT3, SYT6, SYT7 and SYT9. Ca(2+) is required as a cofactor. In terms of tissue distribution, highly expressed in the olfactory bulb.

It localises to the cytoplasmic vesicle. Its subcellular location is the secretory vesicle membrane. In terms of biological role, ca(2+) sensor specifically required for the Ca(2+)-dependent exocytosis of secretory vesicles containing IGF1 in neurons of the olfactory bulb. Exocytosis of IGF1 is required for sensory perception of smell. Not involved in Ca(2+)-dependent synaptic vesicle exocytosis. Acts through Ca(2+) and phospholipid binding to the C2 domain: Ca(2+) induces binding of the C2-domains to phospholipid membranes and to assembled SNARE-complexes; both actions contribute to triggering exocytosis. The protein is Synaptotagmin-10 of Mus musculus (Mouse).